We begin with the raw amino-acid sequence, 2535 residues long: Piezo-type mechanosensitive ion channel component 1 (2535 aa).

The next 3 membrane-spanning stretches (helical) occupy residues 13–25, 29–44, and 59–81; these read LLLP…ASLL, ALSL…LPWL, and LLRA…QICL. N-linked (GlcNAc...) asparagine glycosylation is present at Asn100. A run of 5 helical transmembrane segments spans residues 122 to 138, 193 to 212, 215 to 234, 246 to 266, and 308 to 328; these read VAPD…CLGL, LLVT…AGIA, SAFS…WWSC, LCVM…CYQT, and WPIY…TSLL. The span at 346–357 shows a compositional bias: acidic residues; it reads DEEHELELDQLE. Positions 346-377 are disordered; the sequence is DEEHELELDQLEPEPQARGTTQGATPTTTGPD. Low complexity predominate over residues 358-376; that stretch reads PEPQARGTTQGATPTTTGP. Asn380 is a glycosylation site (N-linked (GlcNAc...) asparagine). A run of 8 helical transmembrane segments spans residues 416 to 436, 439 to 454, 460 to 482, 510 to 527, 572 to 592, 594 to 614, 625 to 646, and 677 to 693; these read LILD…SIMY, WLTF…IWTV, LAML…RYVW, CLDL…WLLL, IYVK…SFAG, LVVY…LFQV, VFWW…TFQF, and LFSS…ACIL. Ser749 carries the phosphoserine modification. Helical transmembrane passes span 803–814, 818–831, 846–860, 913–940, 981–996, 999–1014, 1028–1043, 1083–1104, 1140–1166, 1172–1190, 1204–1222, and 1272–1288; these read LVALYTVWVALK, VMNL…AFAL, VWTC…LYQL, GYIQ…HYRR, GLEI…IGQR, FMVI…ILTR, CLFL…LLCL, TNLI…VFSA, YLDM…TGAT, GLGY…TTLL, LILY…SLLS, and IWDS…RRVF. Residues 1325–1356 are a coiled coil; the sequence is HRQTEERSLAQLKRQMKRIRAKQEKYRQSQAS. Disordered regions lie at residues 1345–1383 and 1556–1597; these read AKQE…RTQW and SGPV…NTRS. Positions 1352 to 1365 are enriched in polar residues; sequence QSQASRGQLQSTDP. A phosphoserine mark is found at Ser1372 and Ser1377. Residues 1579–1597 are compositionally biased toward polar residues; the sequence is SSMTDDTGSPLSTGYNTRS. Phosphoserine is present on residues Ser1614, Ser1618, and Ser1633. A run of 4 helical transmembrane segments spans residues 1644–1687, 1692–1707, 1716–1734, and 1767–1788; these read PELE…LNHM, AASL…WAML, FWMT…KYLF, and DSYI…SQLL. Basic and acidic residues-rich tracts occupy residues 1801 to 1811 and 1842 to 1867; these read PKDHCRSSEKD and PKDH…DLKP. A disordered region spans residues 1801–1911; sequence PKDHCRSSEK…GREAAGRKRL (111 aa). The span at 1868-1881 shows a compositional bias: basic residues; the sequence is QHRRHISIRFRRRK. Helical transmembrane passes span 1965–1984, 2005–2021, 2036–2056, 2065–2080, and 2181–2201; these read YALM…FGFW, PQAF…TMVI, AFQV…LPAV, AVAQ…YFAL, and GLII…MSLI. A disulfide bond links Cys2425 and Cys2429. Residues 2446 to 2466 form a helical membrane-spanning segment; that stretch reads LGFLAGYGIVGLYVSIVLVVG.

It belongs to the PIEZO (TC 1.A.75) family. Homotrimer; the homotrimer forms a propeller-shaped Piezo channel with a cation-ion conducting pore. Heterotrimeric interaction may occur between PIEZO1 and PIEZO2. Interacts with PKD2. Interacts with STOM13. Interacts with TMC1, TMC2, PCDH15 and CIB2; the interaction may be part of the MET complex. Interacts with MDFIC (via C-terminus); the interaction prolongs Piezo channel inactivation. Interacts with MDFI (via C-terminus); the interaction prolongs Piezo channel inactivation. In terms of tissue distribution, moderate expression in lung and kidney. Very weak expression in heart, spleen and liver.

The protein resides in the endoplasmic reticulum membrane. The protein localises to the endoplasmic reticulum-Golgi intermediate compartment membrane. It localises to the cell membrane. Its subcellular location is the cell projection. It is found in the lamellipodium membrane. It catalyses the reaction K(+)(in) = K(+)(out). It carries out the reaction Na(+)(in) = Na(+)(out). The enzyme catalyses Ca(2+)(in) = Ca(2+)(out). The catalysed reaction is Mg(2+)(in) = Mg(2+)(out). Regulated by auxillary subunits MDFIC and MDFI. Down-regulated by phosphatidylserines exposed on the cell surface. Divalent ions decrease the single-channel permeability of K(+). Pore-forming subunit of the mechanosensitive non-specific cation Piezo channel required for rapidly adapting mechanically activated (MA) currents and has a key role in sensing touch and tactile pain. Piezo channels are homotrimeric three-blade propeller-shaped structures that utilize a cap-motion and plug-and-latch mechanism to gate their ion-conducting pathways. Generates currents characterized by a linear current-voltage relationship that are sensitive to ruthenium red and gadolinium. Conductance to monovalent alkali ions is highest for K(+), intermediate for Na(+) and lowest for Li(+). Divalent ions except for Mn(2+) permeate the channel but more slowly than the monovalent ions and they also reduce K(+) currents. Plays a key role in epithelial cell adhesion by maintaining integrin activation through R-Ras recruitment to the ER, most probably in its activated state, and subsequent stimulation of calpain signaling. In inner ear hair cells, PIEZO1/2 subunits may constitute part of the mechanotransducer (MET) non-selective cation channel complex where they may act as pore-forming ion-conducting component in the complex. In the kidney, may contribute to the detection of intraluminal pressure changes and to urine flow sensing. Acts as a shear-stress sensor that promotes endothelial cell organization and alignment in the direction of blood flow through calpain activation. Plays a key role in blood vessel formation and vascular structure in both development and adult physiology. Acts as a sensor of phosphatidylserine (PS) flipping at the plasma membrane and governs morphogenesis of muscle cells. In myoblasts, flippase-mediated PS enrichment at the inner leaflet of plasma membrane triggers channel activation and Ca(2+) influx followed by Rho GTPases signal transduction, leading to assembly of cortical actomyosin fibers and myotube formation. The sequence is that of Piezo-type mechanosensitive ion channel component 1 (Piezo1) from Rattus norvegicus (Rat).